The chain runs to 264 residues: NAD kinase 1 (264 aa).

The Proton acceptor role is filled by D45. NAD(+)-binding positions include 45–46, 122–123, R148, D150, 161–166, and A185; these read DG, NE, and TAYNKS.

It belongs to the NAD kinase family. Requires a divalent metal cation as cofactor.

Its subcellular location is the cytoplasm. It catalyses the reaction NAD(+) + ATP = ADP + NADP(+) + H(+). Its function is as follows. Involved in the regulation of the intracellular balance of NAD and NADP, and is a key enzyme in the biosynthesis of NADP. Catalyzes specifically the phosphorylation on 2'-hydroxyl of the adenosine moiety of NAD to yield NADP. This is NAD kinase 1 from Listeria innocua serovar 6a (strain ATCC BAA-680 / CLIP 11262).